The following is a 190-amino-acid chain: CD70 antigen (190 aa).

Over M1 to S17 the chain is Cytoplasmic. The helical transmembrane segment at I18–G38 threads the bilayer. The Extracellular portion of the chain corresponds to Q39–P190. Residues D52–V188 form the THD domain. Residues N59 and N110 are each glycosylated (N-linked (GlcNAc...) asparagine). Intrachain disulfides connect C111/C148 and C130/C165. Residue N167 is glycosylated (N-linked (GlcNAc...) asparagine).

It belongs to the tumor necrosis factor family. As to quaternary structure, homotrimer. In terms of processing, N-glycosylated.

It is found in the cell membrane. Its function is as follows. Expressed at the plasma membrane of B cells, it is the ligand of the CD27 receptor which is specifically expressed at the surface of T cells. The CD70-CD27 signaling pathway mediates antigen-specific T cell activation and expansion which in turn provides immune surveillance of B cells. The sequence is that of CD70 antigen from Sus scrofa (Pig).